Here is a 346-residue protein sequence, read N- to C-terminus: Protein Rae1 (346 aa).

4 WD repeats span residues 17 to 61, 64 to 105, 126 to 148, and 255 to 289; these read ASPP…ATVP, MKTM…VMQV, LMTGSWDKTLKFWDTRSPNPMMT, and VNDIAFHPVHGTLVTVGSDGTFSFWDKDARTKLKS.

The protein belongs to the WD repeat rae1 family. Interacts with hiw; the interaction with Rae1 may protect hiw from autophagy-mediated degradation. Interacts with Nup98-96. In terms of tissue distribution, head (at protein level).

The protein resides in the cytoplasm. It localises to the perinuclear region. The protein localises to the nucleus. Its subcellular location is the nucleus envelope. It is found in the chromosome. Its function is as follows. Probable component of the nuclear pore complex (NPC) which regulates the nuclear export of specific mRNAs and promotes cell cycle progression during mitosis and male meiosis. Acts with Nup98-96 to promote the nuclear export of specific mRNAs such as Moe, however it does not appear to be required for general nuclear mRNA transport. Essential mitotic and male meiotic cell cycle regulator with roles in many aspects of the cell cycle including chromatin organization and condensation, spindle assembly, chromosome segregation, and maintaining nuclear structure. During male meiosis it is required for completion of meiosis I, as well as accurate cytokinesis of the secondary spermatocytes, and postmeiotic differentiation of spermatids. Acts as a downstream regulatory target of the Hippo/SWH (Sav/Wts/Hpo) signaling pathway to promote mitotic cell cycle progression and proliferation during wing and eye development, and thereby plays a key role in integrating the regulation of proliferation with organ size control. When the Hippo/SWH signaling pathway is inactive, Rae1 acts independently of yki to increase organ size by promoting mitotic S-phase entry and increase cellular proliferation. When the Hippo/SWH signaling pathway is active it inhibits the activity of Rae1 in a Wts-dependent manner to restrict organ growth. However, Rae1 is also able to negatively regulate the levels and activity of yki likely by activating the core kinases of the Hippo/SWH signaling pathway hpo and Wts and increasing the protein levels of hpo, Mer and Wts; it is therefore likely that it functions as part of a negative feedback loop with the Hippo/SWH signaling pathway to regulate pathway homeostasis and prevent organ overgrowth. Promotes mitotic cell cycle progression, at least in part, by increasing the accumulation of mitotic cyclins such as CycB, possibly by directly up-regulating cyclin transcripts or by inhibiting the anaphase promoting complex/cyclosome (APC/C) activator fzy. Also required in presynaptic, postmitotic motor neurons to restrain synaptic terminal growth. Promotes the expression and stability of the an E3 ubiquitin ligase of hiw, and is likely to function in the regulation of synaptic growth by binding to hiw and protecting it from autophagy-mediated degradation. The protein is Protein Rae1 of Drosophila melanogaster (Fruit fly).